A 185-amino-acid chain; its full sequence is Elongation factor P (185 aa).

This sequence belongs to the elongation factor P family.

The protein localises to the cytoplasm. It functions in the pathway protein biosynthesis; polypeptide chain elongation. Its function is as follows. Involved in peptide bond synthesis. Stimulates efficient translation and peptide-bond synthesis on native or reconstituted 70S ribosomes in vitro. Probably functions indirectly by altering the affinity of the ribosome for aminoacyl-tRNA, thus increasing their reactivity as acceptors for peptidyl transferase. The protein is Elongation factor P of Bacillus cytotoxicus (strain DSM 22905 / CIP 110041 / 391-98 / NVH 391-98).